Reading from the N-terminus, the 124-residue chain is Large ribosomal subunit protein bL19 (124 aa).

The protein belongs to the bacterial ribosomal protein bL19 family.

This protein is located at the 30S-50S ribosomal subunit interface and may play a role in the structure and function of the aminoacyl-tRNA binding site. This is Large ribosomal subunit protein bL19 from Orientia tsutsugamushi (strain Boryong) (Rickettsia tsutsugamushi).